A 156-amino-acid chain; its full sequence is Regulatory protein RecX (156 aa).

This sequence belongs to the RecX family.

The protein localises to the cytoplasm. Its function is as follows. Modulates RecA activity. This Pseudomonas putida (strain ATCC 47054 / DSM 6125 / CFBP 8728 / NCIMB 11950 / KT2440) protein is Regulatory protein RecX.